The sequence spans 79 residues: Small ribosomal subunit protein uS17 (79 aa).

It belongs to the universal ribosomal protein uS17 family. As to quaternary structure, part of the 30S ribosomal subunit.

Functionally, one of the primary rRNA binding proteins, it binds specifically to the 5'-end of 16S ribosomal RNA. The polypeptide is Small ribosomal subunit protein uS17 (Caulobacter vibrioides (strain NA1000 / CB15N) (Caulobacter crescentus)).